A 329-amino-acid chain; its full sequence is Endo-beta-N-acetylglucosaminidase F3 (329 aa).

Positions 1–39 (MKKIFFAQCSILLLMLGSCSKMTEDMTPESVNKEASVKS) form a signal peptide, or 40, or 41. The GH18 domain occupies 48 to 329 (GVCIAYYITD…ANAVRDAVKN (282 aa)). O-linked (Man...) threonine glycosylation occurs at threonine 88. The active-site Proton donor is the glutamate 167.

The protein belongs to the glycosyl hydrolase 18 family. Monomer. Post-translationally, carbohydrate at Thr-88 consists of (2-OMe)Man1-4GlcNAcU1-4GlcU1-4Glc1-4(2-OMe)GlcU1-4[(2-OMe)Rham1-2]Man.

It is found in the secreted. The catalysed reaction is an N(4)-(oligosaccharide-(1-&gt;3)-[oligosaccharide-(1-&gt;6)]-beta-D-Man-(1-&gt;4)-beta-D-GlcNAc-(1-&gt;4)-alpha-D-GlcNAc)-L-asparaginyl-[protein] + H2O = an oligosaccharide-(1-&gt;3)-[oligosaccharide-(1-&gt;6)]-beta-D-Man-(1-&gt;4)-D-GlcNAc + N(4)-(N-acetyl-beta-D-glucosaminyl)-L-asparaginyl-[protein]. In terms of biological role, endohydrolysis of the di-N-acetylchitobiosyl unit in high-mannose glycopeptides and glycoproteins. Hydrolyzes bi- and triantennary glycans. The presence of a core-bound fucose greatly augments endo F3 activity on biantennary and, presumably, triantennary oligosaccharides. In Elizabethkingia meningoseptica (Chryseobacterium meningosepticum), this protein is Endo-beta-N-acetylglucosaminidase F3 (endOF3).